The sequence spans 261 residues: Zaragozic acid A biosynthesis cluster protein 8 (261 aa).

Positions 242–254 are enriched in polar residues; sequence GTRSHTPAATQRR. The tract at residues 242 to 261 is disordered; sequence GTRSHTPAATQRRGQGRGCG.

Its pathway is secondary metabolite biosynthesis. Functionally, part of the gene cluster that mediates the biosynthesis of squalestatin S1 (SQS1, also known as zaragozic acid A), a heavily oxidized fungal polyketide that offers potent cholesterol lowering activity by targeting squalene synthase (SS). SQS1 is composed of a 2,8-dioxobicyclic[3.2.1]octane-3,4,5-tricarboxyclic acid core that is connected to two lipophilic polyketide arms. These initial steps feature the priming of an unusual benzoic acid starter unit onto the highly reducing polyketide synthase clz14, followed by oxaloacetate extension and product release to generate a tricarboxylic acid containing product. The phenylalanine ammonia lyase (PAL) clz10 and the acyl-CoA ligase clz12 are involved in transforming phenylalanine into benzoyl-CoA. The citrate synthase-like protein clz17 is involved in connecting the C-alpha-carbons of the hexaketide chain and oxaloacetate to afford the tricarboxylic acid unit. The potential hydrolytic enzymes, clz11 and clz13, are in close proximity to pks2 and may participate in product release. On the other side, the tetraketide arm is synthesized by a the squalestatin tetraketide synthase clz2 and enzymatically esterified to the core in the last biosynthetic step, by the acetyltransferase clz6. The biosynthesis of the tetraketide must involve 3 rounds of chain extension. After the first and second rounds methyl-transfer occurs, and in all rounds of extension the ketoreductase and dehydratase are active. The enoyl reductase and C-MeT of clz2 are not active in the final round of extension. The acetyltransferase clz6 appears to have a broad substrate selectivity for its acyl CoA substrate, allowing the in vitro synthesis of novel squalestatins. The biosynthesis of SQS1 requires several oxidative steps likely performed by oxidoreductases clz3, clz15 and clz16. Finally, in support of the identification of the cluster as being responsible for SQS1 production, the cluster contains a gene encoding a putative squalene synthase (SS) clz20, suggesting a likely mechanism for self-resistance. This Cochliobolus lunatus (Filamentous fungus) protein is Zaragozic acid A biosynthesis cluster protein 8.